Here is a 276-residue protein sequence, read N- to C-terminus: Large ribosomal subunit protein uL2 (276 aa).

Disordered stretches follow at residues P36 to H58 and L214 to K276.

The protein belongs to the universal ribosomal protein uL2 family. As to quaternary structure, part of the 50S ribosomal subunit. Forms a bridge to the 30S subunit in the 70S ribosome.

Its function is as follows. One of the primary rRNA binding proteins. Required for association of the 30S and 50S subunits to form the 70S ribosome, for tRNA binding and peptide bond formation. It has been suggested to have peptidyltransferase activity; this is somewhat controversial. Makes several contacts with the 16S rRNA in the 70S ribosome. This Halalkalibacterium halodurans (strain ATCC BAA-125 / DSM 18197 / FERM 7344 / JCM 9153 / C-125) (Bacillus halodurans) protein is Large ribosomal subunit protein uL2.